The primary structure comprises 94 residues: uncharacterized protein (94 aa).

The chain crosses the membrane as a helical span at residues 13–33 (IVICLTTIISVTIFYILVSFF).

The protein resides in the membrane. This is an uncharacterized protein from Dictyostelium discoideum (Social amoeba).